The following is a 152-amino-acid chain: Endoribonuclease YbeY (152 aa).

H117, H121, and H127 together coordinate Zn(2+).

It belongs to the endoribonuclease YbeY family. It depends on Zn(2+) as a cofactor.

The protein resides in the cytoplasm. Functionally, single strand-specific metallo-endoribonuclease involved in late-stage 70S ribosome quality control and in maturation of the 3' terminus of the 16S rRNA. This chain is Endoribonuclease YbeY, found in Borreliella afzelii (strain PKo) (Borrelia afzelii).